We begin with the raw amino-acid sequence, 466 residues long: MLYGKENRDEAEFLEPIFGSESEQVDLPKYKLAQQSIEPRVAYQLVQDEMLDEGNARLNLATFCQTYMEPEAVKLMSQTLEKNAIDKSEYPRTTEIENRCVNMIADLWNASEKEKFMGTSTIGSSEACMLGGMAMKFSWRKRAEKLGLDINAKKPNLVISSGYQVCWEKFCIYWDIEMREVPMDKEHMSINLDKVMDYVDEYTIGVVGIMGITYTGRYDDIKALDNLIEEYNKQTDYKVYIHVDAASGGLYAPFVEPELEWDFRLKNVISINTSGHKYGLVYPGVGWVLWRDKKYLPEELIFKVSYLGGELPTMAINFSHSASQLIGQYYNFVRYGFDGYKAIHERTHKVAMFLAKEIEKTGMFEIMNDGSQLPIVCYKLKEDSNRGWNLYDLADRLLMKGWQVPAYPLPKNLENEIIQRLVIRADFGMNMAFNYVQDMQEAIEALNKAHILYHEEPENKTYGFTH.

K277 is subject to N6-(pyridoxal phosphate)lysine.

The protein belongs to the group II decarboxylase family. It depends on pyridoxal 5'-phosphate as a cofactor.

It catalyses the reaction L-glutamate + H(+) = 4-aminobutanoate + CO2. Its function is as follows. Converts internalized glutamate to GABA and increases the internal pH. Involved in glutamate-dependent acid resistance. The sequence is that of Glutamate decarboxylase (gadB) from Lactococcus lactis subsp. lactis (strain IL1403) (Streptococcus lactis).